The sequence spans 666 residues: Pentatricopeptide repeat-containing protein At1g64100 (666 aa).

PPR repeat units follow at residues 105–139 (TAVD…RIPL), 140–174 (NIYS…GFQP), 175–209 (DVVT…GFLE), 225–259 (VVIT…GLHI), 260–294 (DVVT…HIKP), 295–329 (DVVI…GIAP), 330–364 (NVFT…EINP), 365–399 (DVLT…CIFP), 400–430 (DTVT…MASP), 431–465 (DVVT…GLVA), 466–500 (NTTT…GVCP), 501–535 (DTIT…KIDL), 536–570 (DTVA…GVEP), 571–605 (DVQT…GHEP), and 606–640 (DNST…GFSG).

The protein belongs to the PPR family. P subfamily.

This Arabidopsis thaliana (Mouse-ear cress) protein is Pentatricopeptide repeat-containing protein At1g64100.